Reading from the N-terminus, the 184-residue chain is Large ribosomal subunit protein uL6 (184 aa).

It belongs to the universal ribosomal protein uL6 family. Part of the 50S ribosomal subunit.

This protein binds to the 23S rRNA, and is important in its secondary structure. It is located near the subunit interface in the base of the L7/L12 stalk, and near the tRNA binding site of the peptidyltransferase center. The chain is Large ribosomal subunit protein uL6 from Thermococcus kodakarensis (strain ATCC BAA-918 / JCM 12380 / KOD1) (Pyrococcus kodakaraensis (strain KOD1)).